Consider the following 669-residue polypeptide: UvrABC system protein B (669 aa).

A Helicase ATP-binding domain is found at 26 to 414; it reads EGLEDGLAHQ…SGDVVEQVVR (389 aa). 39-46 is a binding site for ATP; that stretch reads GVTGSGKT. Positions 92–115 match the Beta-hairpin motif; it reads YYDYYQPEAYVPSSDTFIEKDASV. Residues 431–597 enclose the Helicase C-terminal domain; the sequence is QVDDLLSEIR…GLNKKINDIL (167 aa). Residues 629-664 enclose the UVR domain; that stretch reads ESKIRELEAKMYQHAQDLEFEQAASVRDQVQALREQ.

It belongs to the UvrB family. In terms of assembly, forms a heterotetramer with UvrA during the search for lesions. Interacts with UvrC in an incision complex.

It localises to the cytoplasm. In terms of biological role, the UvrABC repair system catalyzes the recognition and processing of DNA lesions. A damage recognition complex composed of 2 UvrA and 2 UvrB subunits scans DNA for abnormalities. Upon binding of the UvrA(2)B(2) complex to a putative damaged site, the DNA wraps around one UvrB monomer. DNA wrap is dependent on ATP binding by UvrB and probably causes local melting of the DNA helix, facilitating insertion of UvrB beta-hairpin between the DNA strands. Then UvrB probes one DNA strand for the presence of a lesion. If a lesion is found the UvrA subunits dissociate and the UvrB-DNA preincision complex is formed. This complex is subsequently bound by UvrC and the second UvrB is released. If no lesion is found, the DNA wraps around the other UvrB subunit that will check the other stand for damage. This Photorhabdus laumondii subsp. laumondii (strain DSM 15139 / CIP 105565 / TT01) (Photorhabdus luminescens subsp. laumondii) protein is UvrABC system protein B.